The sequence spans 557 residues: Dihydroxy-acid dehydratase (557 aa).

[2Fe-2S] cluster is bound at residue cysteine 49. Aspartate 81 lines the Mg(2+) pocket. Cysteine 122 serves as a coordination point for [2Fe-2S] cluster. Mg(2+) contacts are provided by aspartate 123 and lysine 124. Lysine 124 carries the N6-carboxylysine modification. Residue cysteine 194 participates in [2Fe-2S] cluster binding. Glutamate 446 contacts Mg(2+). The Proton acceptor role is filled by serine 472.

The protein belongs to the IlvD/Edd family. In terms of assembly, homodimer. It depends on [2Fe-2S] cluster as a cofactor. The cofactor is Mg(2+).

It catalyses the reaction (2R)-2,3-dihydroxy-3-methylbutanoate = 3-methyl-2-oxobutanoate + H2O. It carries out the reaction (2R,3R)-2,3-dihydroxy-3-methylpentanoate = (S)-3-methyl-2-oxopentanoate + H2O. The protein operates within amino-acid biosynthesis; L-isoleucine biosynthesis; L-isoleucine from 2-oxobutanoate: step 3/4. It functions in the pathway amino-acid biosynthesis; L-valine biosynthesis; L-valine from pyruvate: step 3/4. Functions in the biosynthesis of branched-chain amino acids. Catalyzes the dehydration of (2R,3R)-2,3-dihydroxy-3-methylpentanoate (2,3-dihydroxy-3-methylvalerate) into 2-oxo-3-methylpentanoate (2-oxo-3-methylvalerate) and of (2R)-2,3-dihydroxy-3-methylbutanoate (2,3-dihydroxyisovalerate) into 2-oxo-3-methylbutanoate (2-oxoisovalerate), the penultimate precursor to L-isoleucine and L-valine, respectively. In Prochlorococcus marinus (strain MIT 9301), this protein is Dihydroxy-acid dehydratase.